The following is a 519-amino-acid chain: MSDYWTTMASLLGMLAFCQTIVQLVFPPELRLAFLHFLTRIRHVFSSHIYFDITEIDGVNTNELYNAVQLYLSSSVTVNDAVSSSNNNTRLSLTRVPNSSSVTFGLSNNDRITDVFNGVTILWEHVVVQRQVQSFSWRPMPEEKRGFTLQINKRDKALVLDSYLDYIVGKSEEIRRRNEERLLYTNSRGVSLDARSHPWDSVRFKHPSTFDTLAMDPEKKKRIMEDLREFANGQGFYQKTGRAWKRGYLLYGPPGTGKSSLIAAMANYLGYDIYDLELTEVQNNSELRKLLMKTSSKSIIVIEDIDCSISLTKRGKNKKKNGSYEYDPGLTNGSGLEEPGSSVTLSGLLNFTDGLWSCCGSEKIFVFTTNHIEKLDSALMRSGRMDMHVHMGFCKFPALKILLKNYLRLEEEDMDSVVLKEMEECVEEAEITPADVSEVLIRNRSDAEKAVREIVSVLKERVVKRRKSVGLKKKKQEGQEEEEEAEEEQEKRALDSPNRRNREVCGFREEEEEEDEKEK.

A signal peptide spans 1–24 (MSDYWTTMASLLGMLAFCQTIVQL). 252-259 (GPPGTGKS) contributes to the ATP binding site. 2 disordered regions span residues 315–335 (GKNKKKNGSYEYDPGLTNGSG) and 467–519 (KSVG…EKEK). Residues 479-488 (QEEEEEAEEE) are compositionally biased toward acidic residues. The segment covering 489 to 508 (QEKRALDSPNRRNREVCGFR) has biased composition (basic and acidic residues). Over residues 509 to 519 (EEEEEEDEKEK) the composition is skewed to acidic residues.

This sequence belongs to the AAA ATPase family. BCS1 subfamily. Requires Mg(2+) as cofactor.

It carries out the reaction ATP + H2O = ADP + phosphate + H(+). This Arabidopsis thaliana (Mouse-ear cress) protein is AAA-ATPase At4g30250.